A 731-amino-acid polypeptide reads, in one-letter code: 1,4-alpha-glucan branching enzyme GlgB (731 aa).

The Nucleophile role is filled by Asp412. Residue Glu465 is the Proton donor of the active site.

This sequence belongs to the glycosyl hydrolase 13 family. GlgB subfamily. Monomer.

The enzyme catalyses Transfers a segment of a (1-&gt;4)-alpha-D-glucan chain to a primary hydroxy group in a similar glucan chain.. Its pathway is glycan biosynthesis; glycogen biosynthesis. Its function is as follows. Catalyzes the formation of the alpha-1,6-glucosidic linkages in glycogen by scission of a 1,4-alpha-linked oligosaccharide from growing alpha-1,4-glucan chains and the subsequent attachment of the oligosaccharide to the alpha-1,6 position. The chain is 1,4-alpha-glucan branching enzyme GlgB from Bordetella parapertussis (strain 12822 / ATCC BAA-587 / NCTC 13253).